The primary structure comprises 133 residues: Helix-loop-helix protein 1 (133 aa).

Positions 1–79 are disordered; that stretch reads MMLNSDTMEL…RRATAKYRTA (79 aa). Residues 25 to 45 are compositionally biased toward gly residues; sequence DCGGGAGPDGAGPGGPGGGQA. The span at 52–65 shows a compositional bias: basic and acidic residues; it reads EPGRKDLQHLSREE. Residues 66–79 are compositionally biased toward basic residues; it reads RRRRRRATAKYRTA. The region spanning 75–127 is the bHLH domain; sequence KYRTAHATRERIRVEAFNLAFAELRKLLPTLPPDKKLSKIEILRLAICYISYL.

In terms of assembly, efficient DNA binding requires dimerization with another bHLH protein.

It localises to the nucleus. Functionally, may serve as DNA-binding protein and may be involved in the control of cell-type determination, possibly within the developing nervous system. This chain is Helix-loop-helix protein 1 (NHLH1), found in Homo sapiens (Human).